The primary structure comprises 706 residues: Polyribonucleotide nucleotidyltransferase (706 aa).

The Mg(2+) site is built by Asp483 and Asp489. In terms of domain architecture, KH spans 550–609; it reads PRITTIWVKTDKIRDVIGTGGKNIRNITETTGVTVDIEDTGRINIASTSKEACDLAIQMI. The S1 motif domain maps to 619–687; the sequence is GKLYMGIVKK…KNGKVKLSRK (69 aa).

The protein belongs to the polyribonucleotide nucleotidyltransferase family. Mg(2+) serves as cofactor.

The protein localises to the cytoplasm. It carries out the reaction RNA(n+1) + phosphate = RNA(n) + a ribonucleoside 5'-diphosphate. Involved in mRNA degradation. Catalyzes the phosphorolysis of single-stranded polyribonucleotides processively in the 3'- to 5'-direction. This Pelobacter propionicus (strain DSM 2379 / NBRC 103807 / OttBd1) protein is Polyribonucleotide nucleotidyltransferase.